The chain runs to 98 residues: Aspartyl/glutamyl-tRNA(Asn/Gln) amidotransferase subunit C (98 aa).

The disordered stretch occupies residues 77–98 (NEAPNPEGDFFRVPQILNTDEE).

Belongs to the GatC family. As to quaternary structure, heterotrimer of A, B and C subunits.

The enzyme catalyses L-glutamyl-tRNA(Gln) + L-glutamine + ATP + H2O = L-glutaminyl-tRNA(Gln) + L-glutamate + ADP + phosphate + H(+). The catalysed reaction is L-aspartyl-tRNA(Asn) + L-glutamine + ATP + H2O = L-asparaginyl-tRNA(Asn) + L-glutamate + ADP + phosphate + 2 H(+). Its function is as follows. Allows the formation of correctly charged Asn-tRNA(Asn) or Gln-tRNA(Gln) through the transamidation of misacylated Asp-tRNA(Asn) or Glu-tRNA(Gln) in organisms which lack either or both of asparaginyl-tRNA or glutaminyl-tRNA synthetases. The reaction takes place in the presence of glutamine and ATP through an activated phospho-Asp-tRNA(Asn) or phospho-Glu-tRNA(Gln). The sequence is that of Aspartyl/glutamyl-tRNA(Asn/Gln) amidotransferase subunit C from Crocosphaera subtropica (strain ATCC 51142 / BH68) (Cyanothece sp. (strain ATCC 51142)).